The primary structure comprises 608 residues: Elongation factor 4 (608 aa).

Residues 11–193 (KKIRNFSIIA…QIVEKVPEPS (183 aa)) form the tr-type G domain. GTP contacts are provided by residues 23–28 (DHGKST) and 140–143 (NKID).

The protein belongs to the TRAFAC class translation factor GTPase superfamily. Classic translation factor GTPase family. LepA subfamily.

Its subcellular location is the cell membrane. The catalysed reaction is GTP + H2O = GDP + phosphate + H(+). Functionally, required for accurate and efficient protein synthesis under certain stress conditions. May act as a fidelity factor of the translation reaction, by catalyzing a one-codon backward translocation of tRNAs on improperly translocated ribosomes. Back-translocation proceeds from a post-translocation (POST) complex to a pre-translocation (PRE) complex, thus giving elongation factor G a second chance to translocate the tRNAs correctly. Binds to ribosomes in a GTP-dependent manner. This is Elongation factor 4 from Listeria welshimeri serovar 6b (strain ATCC 35897 / DSM 20650 / CCUG 15529 / CIP 8149 / NCTC 11857 / SLCC 5334 / V8).